The sequence spans 236 residues: Orotidine 5'-phosphate decarboxylase (236 aa).

Residues aspartate 13, lysine 35, 62–71 (DLKFYDIPQT), threonine 123, arginine 184, glutamine 193, glycine 213, and arginine 214 each bind substrate. Lysine 64 serves as the catalytic Proton donor.

This sequence belongs to the OMP decarboxylase family. Type 1 subfamily. As to quaternary structure, homodimer.

It catalyses the reaction orotidine 5'-phosphate + H(+) = UMP + CO2. The protein operates within pyrimidine metabolism; UMP biosynthesis via de novo pathway; UMP from orotate: step 2/2. In terms of biological role, catalyzes the decarboxylation of orotidine 5'-monophosphate (OMP) to uridine 5'-monophosphate (UMP). This Coxiella burnetii (strain CbuK_Q154) (Coxiella burnetii (strain Q154)) protein is Orotidine 5'-phosphate decarboxylase.